The chain runs to 346 residues: Structure-specific endonuclease subunit SLX1 (346 aa).

Residues 10–92 (ALYCVYILRS…TNPHTSLHIP (83 aa)) enclose the GIY-YIG domain. The SLX1-type zinc-finger motif lies at 238-296 (CVVCKEEIDPEEGGLHAVCSNEGCEGVGHLRCWGRYLLKSEEGGGEGAILPVGGRCPRC). The span at 324–336 (KVKRKRAPRKKTA) shows a compositional bias: basic residues. Residues 324-346 (KVKRKRAPRKKTAKTKETREEDG) are disordered. Residues 337 to 346 (KTKETREEDG) are compositionally biased toward basic and acidic residues.

It belongs to the SLX1 family. As to quaternary structure, forms a heterodimer with SLX4. The cofactor is a divalent metal cation.

Its subcellular location is the nucleus. Catalytic subunit of the SLX1-SLX4 structure-specific endonuclease that resolves DNA secondary structures generated during DNA repair and recombination. Has endonuclease activity towards branched DNA substrates, introducing single-strand cuts in duplex DNA close to junctions with ss-DNA. This chain is Structure-specific endonuclease subunit SLX1, found in Podospora anserina (strain S / ATCC MYA-4624 / DSM 980 / FGSC 10383) (Pleurage anserina).